Consider the following 505-residue polypeptide: Probable malate:quinone oxidoreductase (505 aa).

It belongs to the MQO family. Requires FAD as cofactor.

It catalyses the reaction (S)-malate + a quinone = a quinol + oxaloacetate. It participates in carbohydrate metabolism; tricarboxylic acid cycle; oxaloacetate from (S)-malate (quinone route): step 1/1. The polypeptide is Probable malate:quinone oxidoreductase (Pseudomonas fluorescens).